Here is a 92-residue protein sequence, read N- to C-terminus: Exodeoxyribonuclease 7 small subunit (92 aa).

The disordered stretch occupies residues 1–22; the sequence is MPKKNAISESTNSTPETAPAMT. Polar residues predominate over residues 7–16; it reads ISESTNSTPE.

It belongs to the XseB family. Heterooligomer composed of large and small subunits.

It is found in the cytoplasm. The catalysed reaction is Exonucleolytic cleavage in either 5'- to 3'- or 3'- to 5'-direction to yield nucleoside 5'-phosphates.. In terms of biological role, bidirectionally degrades single-stranded DNA into large acid-insoluble oligonucleotides, which are then degraded further into small acid-soluble oligonucleotides. This chain is Exodeoxyribonuclease 7 small subunit, found in Photorhabdus laumondii subsp. laumondii (strain DSM 15139 / CIP 105565 / TT01) (Photorhabdus luminescens subsp. laumondii).